The primary structure comprises 259 residues: Ribonuclease HII (259 aa).

The 189-residue stretch at 70–258 (TLIVGIDEVG…VKSLVLGKKE (189 aa)) folds into the RNase H type-2 domain. The a divalent metal cation site is built by D76, E77, and D168.

The protein belongs to the RNase HII family. Mn(2+) serves as cofactor. Mg(2+) is required as a cofactor.

Its subcellular location is the cytoplasm. The enzyme catalyses Endonucleolytic cleavage to 5'-phosphomonoester.. In terms of biological role, endonuclease that specifically degrades the RNA of RNA-DNA hybrids. The protein is Ribonuclease HII of Streptococcus pneumoniae (strain ATCC 700669 / Spain 23F-1).